A 490-amino-acid polypeptide reads, in one-letter code: Stomatal closure-related actin-binding protein 3 (490 aa).

The protein belongs to the SCAB family. As to expression, expressed in roots, stems, leaves, siliques and flowers.

It is found in the cytoplasm. Its subcellular location is the cytoskeleton. In terms of biological role, probable plant-specific actin binding protein that bundles and stabilizes microfilaments (MFs). In Arabidopsis thaliana (Mouse-ear cress), this protein is Stomatal closure-related actin-binding protein 3.